Here is a 307-residue protein sequence, read N- to C-terminus: Elongation factor Ts (307 aa).

The tract at residues 79 to 82 (TDFV) is involved in Mg(2+) ion dislocation from EF-Tu.

The protein belongs to the EF-Ts family.

The protein localises to the cytoplasm. Its function is as follows. Associates with the EF-Tu.GDP complex and induces the exchange of GDP to GTP. It remains bound to the aminoacyl-tRNA.EF-Tu.GTP complex up to the GTP hydrolysis stage on the ribosome. This Bartonella henselae (strain ATCC 49882 / DSM 28221 / CCUG 30454 / Houston 1) (Rochalimaea henselae) protein is Elongation factor Ts.